Consider the following 309-residue polypeptide: Tagatose-6-phosphate kinase (309 aa).

The protein belongs to the carbohydrate kinase PfkB family. LacC subfamily.

It carries out the reaction D-tagatofuranose 6-phosphate + ATP = D-tagatofuranose 1,6-bisphosphate + ADP + H(+). The protein operates within carbohydrate metabolism; D-tagatose 6-phosphate degradation; D-glyceraldehyde 3-phosphate and glycerone phosphate from D-tagatose 6-phosphate: step 1/2. The polypeptide is Tagatose-6-phosphate kinase (Streptococcus pyogenes serotype M3 (strain SSI-1)).